An 83-amino-acid chain; its full sequence is Large ribosomal subunit protein eL14 (83 aa).

Belongs to the eukaryotic ribosomal protein eL14 family.

This is Large ribosomal subunit protein eL14 from Thermococcus onnurineus (strain NA1).